Reading from the N-terminus, the 1859-residue chain is Y' element ATP-dependent helicase protein 1 copy 6 (1859 aa).

The Helicase ATP-binding domain occupies 861-1038 (EIYMADTPSV…LQRIGLTGLA (178 aa)). 874-881 (APPGYGKT) provides a ligand contact to ATP. A Helicase C-terminal domain is found at 1095 to 1244 (KLLLALFEIE…EFYGLESKKG (150 aa)). Positions 1318–1461 (ANASTNATTN…ATTTESTNAS (144 aa)) are enriched in low complexity. The tract at residues 1318-1485 (ANASTNATTN…RFHPVTDINK (168 aa)) is disordered. A compositionally biased stretch (basic and acidic residues) spans 1462-1485 (AKEDANKDGNAEDNRFHPVTDINK).

This sequence belongs to the helicase family. Yeast subtelomeric Y' repeat subfamily.

Catalyzes DNA unwinding and is involved in telomerase-independent telomere maintenance. The chain is Y' element ATP-dependent helicase protein 1 copy 6 (YRF1-6) from Saccharomyces cerevisiae (strain ATCC 204508 / S288c) (Baker's yeast).